Consider the following 359-residue polypeptide: MRVLGIETSCDETAAAIVQRDDMGEGRILSNVVLSQIAEHEPYGGVVPEIAARAHVEALDRLVDRALNDAGLKLYEVDAVAATAGPGLIGGLIVGLMTAKALAMAAQKPFYAVNHLEGHALTARLTDGLPFPYLLLLVSGGHTQMVLVRGIGDYERLGTTIDDALGEAFDKTAKLLGLPYPGGPAVERMALQGDQKRFALPRPLKGEARLDFSFSGLKTAVRQTATELVPLTDQDVTDICASFQAAVADTLSDRVGRSLERFKTEFPDCATPSLVVAGGVAANKTLRAALENLCTRHGFAFIAPPLNLCTDNAAMIAWAGAERAATQAPDSLDIAPRSRWPLDEKSAPVFGTGRRGAKA.

The Fe cation site is built by H115 and H119. Substrate is bound by residues 137–141 (LVSGG), D170, G183, and N283. D311 is a binding site for Fe cation. The tract at residues 328–359 (APDSLDIAPRSRWPLDEKSAPVFGTGRRGAKA) is disordered.

It belongs to the KAE1 / TsaD family. Fe(2+) is required as a cofactor.

The protein localises to the cytoplasm. The catalysed reaction is L-threonylcarbamoyladenylate + adenosine(37) in tRNA = N(6)-L-threonylcarbamoyladenosine(37) in tRNA + AMP + H(+). In terms of biological role, required for the formation of a threonylcarbamoyl group on adenosine at position 37 (t(6)A37) in tRNAs that read codons beginning with adenine. Is involved in the transfer of the threonylcarbamoyl moiety of threonylcarbamoyl-AMP (TC-AMP) to the N6 group of A37, together with TsaE and TsaB. TsaD likely plays a direct catalytic role in this reaction. The sequence is that of tRNA N6-adenosine threonylcarbamoyltransferase from Brucella canis (strain ATCC 23365 / NCTC 10854 / RM-666).